A 27-amino-acid polypeptide reads, in one-letter code: Paragonial peptide PS-1 (27 aa).

Positions Asp-1 to Ala-17 are enriched in low complexity. A disordered region spans residues Asp-1 to Ser-27.

Main cells of the accessory glands of males (paragonial gland).

Its subcellular location is the secreted. In terms of biological role, represses female sexual receptivity and stimulates oviposition. This peptide has a low activity. This chain is Paragonial peptide PS-1 (PapC), found in Drosophila funebris (Fruit fly).